Reading from the N-terminus, the 206-residue chain is uncharacterized protein (206 aa).

The region spanning 32–201 (VYIDAGHGGE…AADAIVNGID (170 aa)) is the MurNAc-LAA domain.

The protein belongs to the N-acetylmuramoyl-L-alanine amidase 3 family.

This is an uncharacterized protein from Bacillus subtilis (strain 168).